Here is a 694-residue protein sequence, read N- to C-terminus: Follicle-stimulating hormone receptor (694 aa).

Positions 1–17 (MALLLVSLLAFLGSGAG) are cleaved as a signal peptide. 2 disulfides stabilise this stretch: Cys18-Cys25 and Cys23-Cys32. Residues 18–46 (CHHWLCHCSDRVFLCQDSKVTEIPPDLPR) form the LRRNT domain. At 18-365 (CHHWLCHCSD…EDIMGYNILR (348 aa)) the chain is on the extracellular side. LRR repeat units lie at residues 49–72 (IELRFVLTKLRVIPQGSFSGFKDL), 73–97 (EKIEISQNDVLEVIEADVFSNLPKL), 98–118 (HEIRIERANTLLYINPEAFQN), 119–143 (LPNLRYLLISNTGIKHLPVVHKIQS), 144–169 (LQKVLLDIQDNINLHTIARNSFMGLS), 170–192 (FDSLILWLNKNGIQEIHNCAFNG), 193–216 (TQLDELNLSDNNNLEELPNDVFRG), 217–240 (ASGPVILDISRTKVHSLPSHGLEN), and 241–259 (LKKLRARSTYSLKKLPSLD). 2 N-linked (GlcNAc...) asparagine glycosylation sites follow: Asn191 and Asn199. 4 disulfide bridges follow: Cys275/Cys345, Cys276/Cys292, Cys276/Cys355, and Cys292/Cys337. 2 N-linked (GlcNAc...) asparagine glycosylation sites follow: Asn293 and Asn311. A helical transmembrane segment spans residues 366–386 (VLIWFISILAITGNITVLVIL). Over 387 to 397 (TTSQYKLTVPR) the chain is Cytoplasmic. A helical membrane pass occupies residues 398–420 (FLMCNLAFADLCIGIYLLPIASV). At 421–442 (DIHTKSQYHNYAIDWQTAVGCD) the chain is on the extracellular side. A disulfide bond links Cys441 and Cys516. Residues 443-464 (AAGFFTAFASELSVYTLTAIPL) form a helical membrane-spanning segment. Residues 465–484 (ERWHTITHAMQLERKVQLRH) lie on the Cytoplasmic side of the membrane. A helical transmembrane segment spans residues 485-507 (AASVMVMGWVFAFAAALLPIFGV). Residues 508-527 (SSYMKVSICLPIDIDSPLSQ) are Extracellular-facing. The chain crosses the membrane as a helical span at residues 528 to 549 (LYVMALLVLNVLAFVVICGCYT). The Cytoplasmic portion of the chain corresponds to 550–572 (HIYLTVRNPNIVSSSSDTKIAKR). Residues 573 to 596 (MATLIFTDFLCMAPISLFAISASL) form a helical membrane-spanning segment. Residues 597 to 607 (KAPLITVSKAK) are Extracellular-facing. The helical transmembrane segment at 608–629 (ILLVLFYPINSCANPFLYAIFT) threads the bilayer. The Cytoplasmic segment spans residues 630-694 (KNFRRDFFIL…LVPLSQSAHN (65 aa)).

This sequence belongs to the G-protein coupled receptor 1 family. FSH/LSH/TSH subfamily. In terms of assembly, homotrimer. Functions as a homotrimer binding the FSH hormone heterodimer composed of CGA and FSHB. Interacts with ARRB2. Interacts with APPL2; interaction is independent of follicle stimulating hormone stimulation. In terms of processing, N-glycosylated; indirectly required for FSH-binding, possibly via a conformational change that allows high affinity binding of hormone.

Its subcellular location is the cell membrane. In terms of biological role, g protein-coupled receptor for follitropin, the follicle-stimulating hormone. Through cAMP production activates the downstream PI3K-AKT and ERK1/ERK2 signaling pathways. The chain is Follicle-stimulating hormone receptor (FSHR) from Mesocricetus auratus (Golden hamster).